We begin with the raw amino-acid sequence, 525 residues long: Patatin-like protein 8 (525 aa).

The disordered stretch occupies residues 1-50 (MNRRYEKPPPLSVSSKGKKKHFVNHTAPNTPGNYERTQTSPTLSTARSHE). Residues 26-46 (TAPNTPGNYERTQTSPTLSTA) are compositionally biased toward polar residues. Positions 124–338 (LSIDGGGMRG…AMSNPTAAAI (215 aa)) constitute a PNPLA domain. Residues 128-133 (GGGMRG) carry the GXGXXG motif. S168 (nucleophile) is an active-site residue.

This sequence belongs to the patatin family. Specifically expressed in roots.

In terms of biological role, possesses non-specific lipolytic acyl hydrolase (LAH) activity. Hydrolyzes phospholipids as well as galactolipids. May play a role in disease resistance. The protein is Patatin-like protein 8 (PLP8) of Arabidopsis thaliana (Mouse-ear cress).